A 400-amino-acid polypeptide reads, in one-letter code: DNA polymerase IV (400 aa).

Positions 8 to 191 (ILLCDANSFF…LPVRELFGIG (184 aa)) constitute a UmuC domain. Residues D12 and D109 each contribute to the Mg(2+) site. Residue E110 is part of the active site.

Belongs to the DNA polymerase type-Y family. As to quaternary structure, monomer. Mg(2+) serves as cofactor.

The protein localises to the cytoplasm. It catalyses the reaction DNA(n) + a 2'-deoxyribonucleoside 5'-triphosphate = DNA(n+1) + diphosphate. In terms of biological role, poorly processive, error-prone DNA polymerase involved in untargeted mutagenesis. Copies undamaged DNA at stalled replication forks, which arise in vivo from mismatched or misaligned primer ends. These misaligned primers can be extended by PolIV. Exhibits no 3'-5' exonuclease (proofreading) activity. May be involved in translesional synthesis, in conjunction with the beta clamp from PolIII. The polypeptide is DNA polymerase IV (Moorella thermoacetica (strain ATCC 39073 / JCM 9320)).